The following is a 910-amino-acid chain: E3 ubiquitin-protein ligase HUL5 (910 aa).

M1 carries the N-acetylmethionine modification. The segment at 1 to 25 (MLNFTGQTRRRNVNLGNRTRNSKKD) is disordered. An HECT domain is found at 810 to 910 (YGGYKEEDQT…INSGARFDLS (101 aa)). C878 acts as the Glycyl thioester intermediate in catalysis.

Belongs to the UBE3C family. Interacts with 19S proteasomes.

The protein resides in the cytoplasm. It is found in the cytosol. The protein localises to the nucleus. The catalysed reaction is S-ubiquitinyl-[E2 ubiquitin-conjugating enzyme]-L-cysteine + [acceptor protein]-L-lysine = [E2 ubiquitin-conjugating enzyme]-L-cysteine + N(6)-ubiquitinyl-[acceptor protein]-L-lysine.. It participates in protein modification; protein ubiquitination. Functionally, non-essential E3 ubiquitin-protein ligase that specifically catalyzes 'Lys-29'- and 'Lys-48'-linked polyubiquitin chains. Accepts ubiquitin from an E2 ubiquitin-conjugating enzyme in the form of a thioester and then directly transfers the ubiquitin to targeted substrates. Associates with the proteasome and promotes elongation of ubiquitin chains on substrates bound to the proteasome. Elongation of ubiquitin chains on substrates bound to the proteasome promotes proteasomal processivity. Also promotes ubiquitin elongation of 26S proteasome subunit RPN10. Involved in the stress response required to maintain cell fitness following heat-shock: acts by mediating ubiquitination of cytosolic misfolded proteins, leading to their subsequent degradation. This Saccharomyces cerevisiae (strain ATCC 204508 / S288c) (Baker's yeast) protein is E3 ubiquitin-protein ligase HUL5.